A 645-amino-acid chain; its full sequence is Fructose-1,6-bisphosphatase class 3 (645 aa).

This sequence belongs to the FBPase class 3 family. Requires Mn(2+) as cofactor.

It carries out the reaction beta-D-fructose 1,6-bisphosphate + H2O = beta-D-fructose 6-phosphate + phosphate. It participates in carbohydrate biosynthesis; gluconeogenesis. This chain is Fructose-1,6-bisphosphatase class 3, found in Fusobacterium nucleatum subsp. nucleatum (strain ATCC 25586 / DSM 15643 / BCRC 10681 / CIP 101130 / JCM 8532 / KCTC 2640 / LMG 13131 / VPI 4355).